The chain runs to 82 residues: MGNVYTKDIKRVARELYDKFKDQASDKYDDNKKLVDEYVNVSSKKVKNRIAGYLTRYVKISKNKVEAQEASEELEEDLESET.

This sequence belongs to the eukaryotic ribosomal protein eS17 family.

The sequence is that of Small ribosomal subunit protein eS17 from Sulfolobus acidocaldarius (strain ATCC 33909 / DSM 639 / JCM 8929 / NBRC 15157 / NCIMB 11770).